The sequence spans 353 residues: UDP-N-acetylglucosamine--N-acetylmuramyl-(pentapeptide) pyrophosphoryl-undecaprenol N-acetylglucosamine transferase (353 aa).

UDP-N-acetyl-alpha-D-glucosamine contacts are provided by residues 10–12 (TGG), N124, S183, and Q283.

Belongs to the glycosyltransferase 28 family. MurG subfamily.

It is found in the cell inner membrane. The enzyme catalyses di-trans,octa-cis-undecaprenyl diphospho-N-acetyl-alpha-D-muramoyl-L-alanyl-D-glutamyl-meso-2,6-diaminopimeloyl-D-alanyl-D-alanine + UDP-N-acetyl-alpha-D-glucosamine = di-trans,octa-cis-undecaprenyl diphospho-[N-acetyl-alpha-D-glucosaminyl-(1-&gt;4)]-N-acetyl-alpha-D-muramoyl-L-alanyl-D-glutamyl-meso-2,6-diaminopimeloyl-D-alanyl-D-alanine + UDP + H(+). It participates in cell wall biogenesis; peptidoglycan biosynthesis. Its function is as follows. Cell wall formation. Catalyzes the transfer of a GlcNAc subunit on undecaprenyl-pyrophosphoryl-MurNAc-pentapeptide (lipid intermediate I) to form undecaprenyl-pyrophosphoryl-MurNAc-(pentapeptide)GlcNAc (lipid intermediate II). This Helicobacter acinonychis (strain Sheeba) protein is UDP-N-acetylglucosamine--N-acetylmuramyl-(pentapeptide) pyrophosphoryl-undecaprenol N-acetylglucosamine transferase.